Consider the following 87-residue polypeptide: Omega-lycotoxin-Am1a (87 aa).

A signal peptide spans 1–17 (MKLSIFFVLFFIAIAYC). Positions 18–40 (QPEFLDDEEDEVEETLPVAEEGR) are excised as a propeptide. Cystine bridges form between Cys-44/Cys-59, Cys-51/Cys-64, Cys-58/Cys-84, and Cys-66/Cys-82.

The protein belongs to the neurotoxin omega-lctx family. In terms of tissue distribution, expressed by the venom gland.

Its subcellular location is the secreted. Modulates Cav2.1/CACNA1A voltage-gated calcium channels (P/Q-type currents) in rat cerebellar Purkinje cells and hippocampal CA1-CA3 neurons. At saturating concentrations (&gt;10 nM) decelerates activation kinetics and slightly increases peak amplitude without affecting deactivation kinetics. In vivo, does not cause death when intravenously injected into mice. In rat models, through its activity on Cav2.1/CACNA1A, has an ameliorative effect on memory defects provoked by hyperstimulation of N-methyl-D-aspartate receptors (NMDARs) in the hippocampus. The sequence is that of Omega-lycotoxin-Am1a from Alopecosa marikovskyi (Wolf spider).